Reading from the N-terminus, the 181-residue chain is ATP synthase subunit delta (181 aa).

This sequence belongs to the ATPase delta chain family. As to quaternary structure, F-type ATPases have 2 components, F(1) - the catalytic core - and F(0) - the membrane proton channel. F(1) has five subunits: alpha(3), beta(3), gamma(1), delta(1), epsilon(1). F(0) has three main subunits: a(1), b(2) and c(10-14). The alpha and beta chains form an alternating ring which encloses part of the gamma chain. F(1) is attached to F(0) by a central stalk formed by the gamma and epsilon chains, while a peripheral stalk is formed by the delta and b chains.

The protein localises to the cell membrane. Functionally, f(1)F(0) ATP synthase produces ATP from ADP in the presence of a proton or sodium gradient. F-type ATPases consist of two structural domains, F(1) containing the extramembraneous catalytic core and F(0) containing the membrane proton channel, linked together by a central stalk and a peripheral stalk. During catalysis, ATP synthesis in the catalytic domain of F(1) is coupled via a rotary mechanism of the central stalk subunits to proton translocation. In terms of biological role, this protein is part of the stalk that links CF(0) to CF(1). It either transmits conformational changes from CF(0) to CF(1) or is implicated in proton conduction. In Oceanobacillus iheyensis (strain DSM 14371 / CIP 107618 / JCM 11309 / KCTC 3954 / HTE831), this protein is ATP synthase subunit delta.